We begin with the raw amino-acid sequence, 458 residues long: UDP-N-acetylmuramate--L-alanine ligase (458 aa).

Position 112–118 (112–118) interacts with ATP; sequence GTHGKTT.

Belongs to the MurCDEF family.

Its subcellular location is the cytoplasm. It catalyses the reaction UDP-N-acetyl-alpha-D-muramate + L-alanine + ATP = UDP-N-acetyl-alpha-D-muramoyl-L-alanine + ADP + phosphate + H(+). It participates in cell wall biogenesis; peptidoglycan biosynthesis. Functionally, cell wall formation. The chain is UDP-N-acetylmuramate--L-alanine ligase from Syntrophotalea carbinolica (strain DSM 2380 / NBRC 103641 / GraBd1) (Pelobacter carbinolicus).